The following is a 255-amino-acid chain: MNILVTNDDGVTADGILCLARYLSKKHEVTVVAPETEQSAVGHAITLRFPLWLRKIDINEEFEIYAVSGTPADCVKMGIDVVLKEKPDLLISGINRGNNLGTDVVYSGTVSGALEGAIAGVPSIAISSFSFENPLYETAAKFILEFLEEFDVKSIPRFTALNINVPSVPYGELKGWKLTRQSKRMYEDYFEQRKDPSGGNYYWMMGNIIENDPDPKADYKAVAEKYVSVTPISVFLTNEEYLKRLEERYEDKAIR.

Positions 8, 9, 39, and 95 each coordinate a divalent metal cation.

The protein belongs to the SurE nucleotidase family. It depends on a divalent metal cation as a cofactor.

It localises to the cytoplasm. It catalyses the reaction a ribonucleoside 5'-phosphate + H2O = a ribonucleoside + phosphate. In terms of biological role, nucleotidase that shows phosphatase activity on nucleoside 5'-monophosphates. This chain is 5'-nucleotidase SurE, found in Thermosipho melanesiensis (strain DSM 12029 / CIP 104789 / BI429).